Consider the following 274-residue polypeptide: Ribulose-phosphate 3-epimerase, chloroplastic (274 aa).

Residues 1 to 39 constitute a chloroplast transit peptide; sequence MASPSSSSSLCSTFASPRAASLGRRLAFSSPRKAFRVRA. Position 56 (Ser-56) interacts with substrate. A divalent metal cation contacts are provided by His-81, Asp-83, and His-114. The active-site Proton acceptor is Asp-83. Substrate is bound by residues His-114, 192 to 195, 225 to 227, and 247 to 248; these read GFGG, DGG, and GS. A divalent metal cation is bound at residue Asp-225. Asp-225 serves as the catalytic Proton donor.

The protein belongs to the ribulose-phosphate 3-epimerase family. Homooctamer. Requires Co(2+) as cofactor. Fe(2+) serves as cofactor. The cofactor is Mn(2+). It depends on Zn(2+) as a cofactor.

The protein resides in the plastid. Its subcellular location is the chloroplast thylakoid membrane. The catalysed reaction is D-ribulose 5-phosphate = D-xylulose 5-phosphate. The protein operates within carbohydrate biosynthesis; Calvin cycle. In terms of biological role, catalyzes the reversible epimerization of D-ribulose 5-phosphate to D-xylulose 5-phosphate. The chain is Ribulose-phosphate 3-epimerase, chloroplastic (RPE) from Oryza sativa subsp. japonica (Rice).